The following is a 141-amino-acid chain: Prefoldin subunit alpha (141 aa).

Belongs to the prefoldin subunit alpha family. Heterohexamer of two alpha and four beta subunits.

Its subcellular location is the cytoplasm. In terms of biological role, molecular chaperone capable of stabilizing a range of proteins. Seems to fulfill an ATP-independent, HSP70-like function in archaeal de novo protein folding. This chain is Prefoldin subunit alpha (pfdA), found in Methanothermobacter thermautotrophicus (strain ATCC 29096 / DSM 1053 / JCM 10044 / NBRC 100330 / Delta H) (Methanobacterium thermoautotrophicum).